Consider the following 363-residue polypeptide: Peptide chain release factor 1 (363 aa).

Residue Gln237 is modified to N5-methylglutamine. Basic and acidic residues predominate over residues 287–299 (EQHKEQASTRKEL). The disordered stretch occupies residues 287 to 306 (EQHKEQASTRKELIGSGDRS).

This sequence belongs to the prokaryotic/mitochondrial release factor family. In terms of processing, methylated by PrmC. Methylation increases the termination efficiency of RF1.

The protein localises to the cytoplasm. Its function is as follows. Peptide chain release factor 1 directs the termination of translation in response to the peptide chain termination codons UAG and UAA. This chain is Peptide chain release factor 1, found in Ruthia magnifica subsp. Calyptogena magnifica.